Here is a 687-residue protein sequence, read N- to C-terminus: Guanine-nucleotide exchange factor YEL1 (687 aa).

An SEC7 domain is found at 57–264 (ILQNKEAAND…SEYYKTLNET (208 aa)). Positions 63 to 97 (AANDEKPVIPTTDTATAGTGTEDISSTQSEETDQN) are disordered. The segment covering 73–83 (TTDTATAGTGT) has biased composition (low complexity). Threonine 290 is modified (phosphothreonine). Serine 293 and serine 299 each carry phosphoserine. The PH domain occupies 412–551 (TSRRTSLSYL…DCINFWAGRI (140 aa)).

The protein belongs to the YEL1 family.

It localises to the cytoplasm. Its subcellular location is the cell membrane. The protein resides in the bud neck. It is found in the bud tip. In terms of biological role, guanine nucleotide exchange factor for ARF3 required for localization of ARF3 to the bud neck and tip and involved in actin patch polarization. The sequence is that of Guanine-nucleotide exchange factor YEL1 (YEL1) from Saccharomyces cerevisiae (strain JAY291) (Baker's yeast).